Consider the following 224-residue polypeptide: C-reactive protein (224 aa).

A signal peptide spans 1–18; the sequence is MEKLLCFLVLTSLSHAFG. Residue Q19 is modified to Pyrrolidone carboxylic acid. The Pentraxin (PTX) domain maps to 23–224; it reads SRKAFVFPKE…EVFTKPQLWP (202 aa). The cysteines at positions 54 and 115 are disulfide-linked. Positions 78, 79, 156, 157, 158, and 168 each coordinate Ca(2+).

The protein belongs to the pentraxin family. As to quaternary structure, homopentamer. Pentraxin (or pentaxin) have a discoid arrangement of 5 non-covalently bound subunits. Interacts with FCN1; may regulate monocyte activation by FCN1. The cofactor is Ca(2+). As to expression, found in plasma.

The protein localises to the secreted. In terms of biological role, displays several functions associated with host defense: it promotes agglutination, bacterial capsular swelling, phagocytosis and complement fixation through its calcium-dependent binding to phosphorylcholine. Can interact with DNA and histones and may scavenge nuclear material released from damaged circulating cells. In Homo sapiens (Human), this protein is C-reactive protein (CRP).